The following is a 981-amino-acid chain: Lateral signaling target protein 2 homolog (981 aa).

Residues 308–462 form a disordered region; sequence PLGSSSIEAP…LESSDDDTDE (155 aa). 4 stretches are compositionally biased toward low complexity: residues 326–356, 369–380, 390–404, and 412–433; these read TTSS…TTNT, NNHNSNSNSSTN, SPSM…TPTA, and PSHS…PADW. Residues 434-462 are compositionally biased toward acidic residues; it reads SDGDDEDEDDDDIEVDEEDLESSDDDTDE. S544 and S545 each carry phosphoserine. 2 disordered regions span residues 561–642 and 749–897; these read EQMQ…SSLS and DNVF…SPPA. The segment covering 576-611 has biased composition (basic residues); that stretch reads HSHRHHQRHHHHHHHRHSHQHRQPHPHRTTRSGRKR. Positions 630 to 642 are enriched in low complexity; that stretch reads LASGDTSAASSLS. Over residues 760–791 the composition is skewed to polar residues; the sequence is ATGQRHSAGASMQRNNTIDLASQSGEGSPSGA. A Phosphoserine modification is found at S805. 2 stretches are compositionally biased toward low complexity: residues 811 to 866 and 883 to 896; these read AASS…PVSA and PSSA…LSPP. The segment at 901 to 961 adopts an FYVE-type zinc-finger fold; it reads DGKAPRCMAC…VCRDCYVREV (61 aa). C907, C910, C923, C926, C931, C934, C953, and C956 together coordinate Zn(2+).

It belongs to the lst-2 family.

In terms of biological role, negative regulator of epidermal growth factor receptor (EGFR) signaling. The chain is Lateral signaling target protein 2 homolog from Drosophila erecta (Fruit fly).